The sequence spans 245 residues: 1-(5-phosphoribosyl)-5-[(5-phosphoribosylamino)methylideneamino] imidazole-4-carboxamide isomerase (245 aa).

Asp7 functions as the Proton acceptor in the catalytic mechanism. Catalysis depends on Asp129, which acts as the Proton donor.

The protein belongs to the HisA/HisF family.

It localises to the cytoplasm. It carries out the reaction 1-(5-phospho-beta-D-ribosyl)-5-[(5-phospho-beta-D-ribosylamino)methylideneamino]imidazole-4-carboxamide = 5-[(5-phospho-1-deoxy-D-ribulos-1-ylimino)methylamino]-1-(5-phospho-beta-D-ribosyl)imidazole-4-carboxamide. Its pathway is amino-acid biosynthesis; L-histidine biosynthesis; L-histidine from 5-phospho-alpha-D-ribose 1-diphosphate: step 4/9. The protein is 1-(5-phosphoribosyl)-5-[(5-phosphoribosylamino)methylideneamino] imidazole-4-carboxamide isomerase of Shewanella sp. (strain MR-4).